The chain runs to 295 residues: Zinc finger CCCH domain-containing protein 44 (295 aa).

The interval 1 to 31 is disordered; that stretch reads MEAGGGKRAAPEGTNGAAKRARASESSQVGV. 2 consecutive C3H1-type zinc fingers follow at residues 32–60 and 98–126; these read GSKL…HNFP and SVKT…HGER. The 65-residue stretch at 166–230 folds into the KH domain; sequence SATAKISVDA…DQIKHASAMV (65 aa). The segment at 259-286 adopts a C3H1-type 3 zinc-finger fold; it reads NFKTKLCENFNKGSCTFGDRCHFAHGES.

In Oryza sativa subsp. japonica (Rice), this protein is Zinc finger CCCH domain-containing protein 44.